The chain runs to 520 residues: GMP synthase [glutamine-hydrolyzing] (520 aa).

The Glutamine amidotransferase type-1 domain maps to 13–205; the sequence is KIIVLDYGSQ…ALNICKAKGD (193 aa). C90 serves as the catalytic Nucleophile. Active-site residues include H179 and E181. The region spanning 206-395 is the GMPS ATP-PPase domain; that stretch reads WSMDNFIDMQ…LGMPDHIVWR (190 aa). ATP is bound at residue 233-239; sequence SGGVDSS.

As to quaternary structure, homodimer.

It catalyses the reaction XMP + L-glutamine + ATP + H2O = GMP + L-glutamate + AMP + diphosphate + 2 H(+). It functions in the pathway purine metabolism; GMP biosynthesis; GMP from XMP (L-Gln route): step 1/1. In terms of biological role, catalyzes the synthesis of GMP from XMP. The protein is GMP synthase [glutamine-hydrolyzing] of Streptococcus pneumoniae serotype 2 (strain D39 / NCTC 7466).